The chain runs to 753 residues: Inactive protein-tyrosine phosphatase egg-5 (753 aa).

Disordered regions lie at residues 26–46 (TSLQ…STDN) and 77–116 (RKKV…YAAP). Positions 35–46 (NTDDSSADSTDN) are enriched in low complexity. The segment covering 84-94 (AQKDRRSKERL) has biased composition (basic and acidic residues). The region spanning 408–661 (MERRFEILEN…IFVHRLVAFF (254 aa)) is the Tyrosine-protein phosphatase domain.

Belongs to the protein-tyrosine phosphatase family. Part of a complex, consisting of pseudophosphatases egg-3, egg-4, egg-5 and kinase mbk-2; this complex is required for the oocyte-to-zygote transition. Interacts (via tyrosine-protein phosphatase domain) with kinase mbk-2 (via 'Tyr-619' and 'Tyr-621'); mbk-2 tyrosine phosphorylation enhances the interaction.

It localises to the cytoplasm. The protein localises to the cell cortex. Functionally, inactive phosphatase which acts redundantly with egg-4 in the oocyte-to-zygote transition. Required for polarized cortical actin cytoskeleton rearrangement in the oocyte before and after fertilization. Together with egg-4, required for the cortical localization of kinase mbk-2 in maturing oocyte until the end of meiosis I. Also required for kinase mbk-2, pseudophosphatase egg-3 and chitin synthase chs-1 localization to cytoplasmic foci after fertilization. The polypeptide is Inactive protein-tyrosine phosphatase egg-5 (Caenorhabditis elegans).